We begin with the raw amino-acid sequence, 231 residues long: 2-C-methyl-D-erythritol 4-phosphate cytidylyltransferase (231 aa).

It belongs to the IspD/TarI cytidylyltransferase family. IspD subfamily.

The enzyme catalyses 2-C-methyl-D-erythritol 4-phosphate + CTP + H(+) = 4-CDP-2-C-methyl-D-erythritol + diphosphate. The protein operates within isoprenoid biosynthesis; isopentenyl diphosphate biosynthesis via DXP pathway; isopentenyl diphosphate from 1-deoxy-D-xylulose 5-phosphate: step 2/6. Functionally, catalyzes the formation of 4-diphosphocytidyl-2-C-methyl-D-erythritol from CTP and 2-C-methyl-D-erythritol 4-phosphate (MEP). This Bacillus licheniformis (strain ATCC 14580 / DSM 13 / JCM 2505 / CCUG 7422 / NBRC 12200 / NCIMB 9375 / NCTC 10341 / NRRL NRS-1264 / Gibson 46) protein is 2-C-methyl-D-erythritol 4-phosphate cytidylyltransferase.